We begin with the raw amino-acid sequence, 427 residues long: Mitogen-activated protein kinase 8B (427 aa).

Residues 26–321 enclose the Protein kinase domain; sequence YQNLRPIGSG…VDEALQHPYI (296 aa). Residues 33–40 and Lys-55 each bind ATP; that span reads GSGAQGIV. The active-site Proton acceptor is Asp-151. Phosphothreonine is present on Thr-183. Residues 183-185 carry the TXY motif; the sequence is TPY. Tyr-185 bears the Phosphotyrosine mark. Residues 372–427 are disordered; the sequence is IRGQPSPIGAAVINGSPQPSSSSSINDVSSMSTEPTVASDTDSSLEASAGPLSCCR. Positions 387-403 are enriched in low complexity; that stretch reads SPQPSSSSSINDVSSMS. Over residues 404-417 the composition is skewed to polar residues; sequence TEPTVASDTDSSLE.

This sequence belongs to the protein kinase superfamily. CMGC Ser/Thr protein kinase family. MAP kinase subfamily. It depends on Mg(2+) as a cofactor. Dually phosphorylated on Thr-183 and Tyr-185, which activates the enzyme. Expressed at high levels in the ovary and at lower levels in brain, gill, heart, spleen, liver, kidney, muscle, bladder and gut.

The catalysed reaction is L-seryl-[protein] + ATP = O-phospho-L-seryl-[protein] + ADP + H(+). It catalyses the reaction L-threonyl-[protein] + ATP = O-phospho-L-threonyl-[protein] + ADP + H(+). With respect to regulation, activated by threonine and tyrosine phosphorylation. Responds to activation by environmental stress and pro-inflammatory cytokines by phosphorylating a number of transcription factors, primarily components of AP-1 such as c-Jun and ATF2 and thus regulates AP-1 transcriptional activity. May play a role in the regulation of the circadian clock. The chain is Mitogen-activated protein kinase 8B (mapk8b) from Cyprinus carpio (Common carp).